We begin with the raw amino-acid sequence, 282 residues long: MSSYENHQALDGLTLGKSTDYRDNYDASLLQGVPRSLNRDPLGLTADNLPFHGADIWTLYELSWLNSQGLPQVAVGHVELDYTSVNLIESKSFKLYLNSFNQTRFDTWETVRQTLERDLRACAQGSVSVRLHRLDELEGQPVAHFHGTCIDDQDISIDNYQFTTDYLQHAVSGEKQVEETLVSHLLKSNCLITHQPDWGSIQIQYRGRKIDREKLLRYLVSFRHHNEFHEQCVERIFNDILRFCQPETLSVYARYTRRGGLDINPWRSNTDFVPATGRLARQ.

Residue 88–90 (IES) participates in substrate binding. 90–91 (SK) contacts NADPH. The active-site Thioimide intermediate is the cysteine 190. The Proton donor role is filled by aspartate 197. 229–230 (HE) is a binding site for substrate. Residue 258-259 (RG) coordinates NADPH.

This sequence belongs to the GTP cyclohydrolase I family. QueF type 2 subfamily. Homodimer.

The protein resides in the cytoplasm. The enzyme catalyses 7-aminomethyl-7-carbaguanine + 2 NADP(+) = 7-cyano-7-deazaguanine + 2 NADPH + 3 H(+). It participates in tRNA modification; tRNA-queuosine biosynthesis. In terms of biological role, catalyzes the NADPH-dependent reduction of 7-cyano-7-deazaguanine (preQ0) to 7-aminomethyl-7-deazaguanine (preQ1). The sequence is that of NADPH-dependent 7-cyano-7-deazaguanine reductase from Salmonella paratyphi B (strain ATCC BAA-1250 / SPB7).